A 377-amino-acid chain; its full sequence is Nitric oxide reductase FlRd-NAD(+) reductase (377 aa).

The protein belongs to the FAD-dependent oxidoreductase family. Requires FAD as cofactor.

Its subcellular location is the cytoplasm. It catalyses the reaction 2 reduced [nitric oxide reductase rubredoxin domain] + NAD(+) + H(+) = 2 oxidized [nitric oxide reductase rubredoxin domain] + NADH. It functions in the pathway nitrogen metabolism; nitric oxide reduction. Functionally, one of at least two accessory proteins for anaerobic nitric oxide (NO) reductase. Reduces the rubredoxin moiety of NO reductase. This is Nitric oxide reductase FlRd-NAD(+) reductase from Escherichia coli O127:H6 (strain E2348/69 / EPEC).